We begin with the raw amino-acid sequence, 468 residues long: Chitoporin (468 aa).

The N-terminal stretch at 1–32 (MRTFSGKRSTLALAIAGVTAMSGFMAMPEARA) is a signal peptide.

This sequence belongs to the outer membrane porin (Opr) (TC 1.B.25) family.

The protein localises to the cell outer membrane. Involved in the uptake of chitosugars. In Escherichia coli (strain K12), this protein is Chitoporin (chiP).